The primary structure comprises 314 residues: Methenyltetrahydromethanopterin cyclohydrolase (314 aa).

The protein belongs to the MCH family.

The protein resides in the cytoplasm. It catalyses the reaction 5,10-methenyl-5,6,7,8-tetrahydromethanopterin + H2O = N(5)-formyl-5,6,7,8-tetrahydromethanopterin + H(+). The protein operates within one-carbon metabolism; methanogenesis from CO(2); 5,10-methenyl-5,6,7,8-tetrahydromethanopterin from CO(2): step 3/3. Functionally, catalyzes the reversible interconversion of 5-formyl-H(4)MPT to methenyl-H(4)MPT(+). In Methanocorpusculum labreanum (strain ATCC 43576 / DSM 4855 / Z), this protein is Methenyltetrahydromethanopterin cyclohydrolase.